Consider the following 113-residue polypeptide: Molt-inhibiting hormone (113 aa).

Residues 1–35 form the signal peptide; it reads MMSRTESRYSSQRTWLLSMVVLAALWSISVQRATA. 3 disulfides stabilise this stretch: Cys-42–Cys-79, Cys-59–Cys-75, and Cys-62–Cys-88.

Belongs to the arthropod CHH/MIH/GIH/VIH hormone family.

It localises to the secreted. Functionally, inhibits Y-organs where molting hormone (ecdysteroid) is secreted. A molting cycle is initiated when MIH secretion diminishes or stops. The sequence is that of Molt-inhibiting hormone from Metacarcinus magister (Dungeness crab).